The chain runs to 425 residues: 5-hydroxytryptamine receptor 7 (425 aa).

Over 1 to 72 (MLIQVQPSHL…LLYGDTEKIV (72 aa)) the chain is Extracellular. 3 N-linked (GlcNAc...) asparagine glycosylation sites follow: Asn-14, Asn-41, and Asn-51. The chain crosses the membrane as a helical span at residues 73 to 97 (IGVVLSIITLFTIAGNALVIISVCI). The Cytoplasmic portion of the chain corresponds to 98–107 (VKKLRQPSNY). The helical transmembrane segment at 108 to 129 (LVVSLAAADLSVAVAVMPFVII) threads the bilayer. The Extracellular portion of the chain corresponds to 130–141 (TDLVGGEWLFGK). A helical membrane pass occupies residues 142–167 (VFCNVFIAMDVMCCTASIMTLCVISV). An intrachain disulfide couples Cys-144 to Cys-220. Residue Asp-151 participates in serotonin binding. Residues 168 to 187 (DRYLGITRPLTYPARQNGKL) lie on the Cytoplasmic side of the membrane. A helical transmembrane segment spans residues 188 to 208 (MAKMVFIVWLLSASITLPPLF). Over 209–226 (GWAKNVNVERVCLISQDF) the chain is Extracellular. The helical transmembrane segment at 227–249 (GYTVYSTAVAFYIPMTVMLVMYQ) threads the bilayer. Residues 250–322 (RIFVAAKISA…SIFKREQKAA (73 aa)) lie on the Cytoplasmic side of the membrane. Residues 323–348 (RTLGIIVGAFTFCWLPFFLLSTARPF) traverse the membrane as a helical segment. Over 349–359 (ICGIMCSCMPL) the chain is Extracellular. The chain crosses the membrane as a helical span at residues 360–383 (RLERTLLWLGYTNSLINPLIYAFF). Residues 384–425 (NRDLRTTFWNLLRCKYTNINRRLSAASMHEALKVTERHEGIL) are Cytoplasmic-facing. Cys-397 is lipidated: S-palmitoyl cysteine.

It belongs to the G-protein coupled receptor 1 family.

It is found in the cell membrane. G-protein coupled receptor for 5-hydroxytryptamine (serotonin), a biogenic hormone that functions as a neurotransmitter, a hormone and a mitogen. Ligand binding causes a conformation change that triggers signaling via guanine nucleotide-binding proteins (G proteins) and modulates the activity of downstream effectors. HTR7 is coupled to G(s) G alpha proteins and mediates activation of adenylate cyclase activity. This chain is 5-hydroxytryptamine receptor 7 (htr7), found in Xenopus laevis (African clawed frog).